The chain runs to 78 residues: MLIKVKTLTGKEIELDIDPNDKVSRIKERVEEKEGIPPSQQRLIYAGKQMADDKNAESYHLEGGSVLHLVLALRGGSC.

It belongs to the ubiquitin family.

In Schizosaccharomyces pombe (strain 972 / ATCC 24843) (Fission yeast), this protein is Ubiquitin-like protein 1 (ubl1).